We begin with the raw amino-acid sequence, 121 residues long: Large ribosomal subunit protein bL12 (121 aa).

The protein belongs to the bacterial ribosomal protein bL12 family. As to quaternary structure, homodimer. Part of the ribosomal stalk of the 50S ribosomal subunit. Forms a multimeric L10(L12)X complex, where L10 forms an elongated spine to which 2 to 4 L12 dimers bind in a sequential fashion. Binds GTP-bound translation factors.

In terms of biological role, forms part of the ribosomal stalk which helps the ribosome interact with GTP-bound translation factors. Is thus essential for accurate translation. The polypeptide is Large ribosomal subunit protein bL12 (Streptococcus pyogenes serotype M3 (strain ATCC BAA-595 / MGAS315)).